A 71-amino-acid polypeptide reads, in one-letter code: Protein CYSTEINE-RICH TRANSMEMBRANE MODULE 3 (71 aa).

Residues 30–49 are disordered; the sequence is VMMKDSPQTVQPPHEGQSKG. The chain crosses the membrane as a helical span at residues 48 to 64; that stretch reads KGSGGFLRGCLAAMCCC.

It belongs to the CYSTM1 family. In terms of assembly, heterodimers. Interacts with CYSTM7 and WIH1/CYSTM13. In terms of tissue distribution, mostly expressed in leaves and flowers and, to a lower extent, in stems, siliques, shoots and roots.

It localises to the cell membrane. It is found in the cytoplasm. The protein resides in the mitochondrion. Its function is as follows. Negatively regulates salt stress responses and Na(+) homeostasis. Prevents Na(+) efflux, disturbs reactive oxygen species (ROS) homeostasis, and represses the expression of nuclear salt stress-responsive genes. Involved in resistance to abiotic stress. This chain is Protein CYSTEINE-RICH TRANSMEMBRANE MODULE 3, found in Arabidopsis thaliana (Mouse-ear cress).